A 577-amino-acid polypeptide reads, in one-letter code: Serine/threonine-protein kinase AGC1-5 (577 aa).

The span at Met1–Val12 shows a compositional bias: polar residues. The tract at residues Met1–Gly151 is disordered. The segment covering Pro44–Val55 has biased composition (basic and acidic residues). Composition is skewed to polar residues over residues Thr69 to Gly87 and Leu110 to Ala120. Positions Phe185–Phe509 constitute a Protein kinase domain. ATP-binding positions include Leu191–Val199 and Lys214. Asp310 (proton acceptor) is an active-site residue. The region spanning Glu510–Phe577 is the AGC-kinase C-terminal domain.

The protein belongs to the protein kinase superfamily. AGC Ser/Thr protein kinase family. In terms of assembly, interacts with PDPK1/PDK1. Post-translationally, autophosphorylated and phosphorylated by PDPK1/PDK1. As to expression, specifically expressed in pollen grains.

It carries out the reaction L-seryl-[protein] + ATP = O-phospho-L-seryl-[protein] + ADP + H(+). The enzyme catalyses L-threonyl-[protein] + ATP = O-phospho-L-threonyl-[protein] + ADP + H(+). Its activity is regulated as follows. Activated by PDPK1/PDK1. Functions redudantly with AGC1-7 as signaling component in the pollen tube. Required for polarized growth of pollen tubes. The polypeptide is Serine/threonine-protein kinase AGC1-5 (Arabidopsis thaliana (Mouse-ear cress)).